A 188-amino-acid polypeptide reads, in one-letter code: Phosphoribosylglycinamide formyltransferase (188 aa).

12–14 (GSN) serves as a coordination point for N(1)-(5-phospho-beta-D-ribosyl)glycinamide. Residues Lys-66, 91-94 (MRLI), and Asn-108 each bind (6R)-10-formyltetrahydrofolate. The active-site Proton donor is His-110.

It belongs to the GART family.

It carries out the reaction N(1)-(5-phospho-beta-D-ribosyl)glycinamide + (6R)-10-formyltetrahydrofolate = N(2)-formyl-N(1)-(5-phospho-beta-D-ribosyl)glycinamide + (6S)-5,6,7,8-tetrahydrofolate + H(+). It functions in the pathway purine metabolism; IMP biosynthesis via de novo pathway; N(2)-formyl-N(1)-(5-phospho-D-ribosyl)glycinamide from N(1)-(5-phospho-D-ribosyl)glycinamide (10-formyl THF route): step 1/1. Functionally, catalyzes the transfer of a formyl group from 10-formyltetrahydrofolate to 5-phospho-ribosyl-glycinamide (GAR), producing 5-phospho-ribosyl-N-formylglycinamide (FGAR) and tetrahydrofolate. In Staphylococcus aureus (strain COL), this protein is Phosphoribosylglycinamide formyltransferase.